The primary structure comprises 136 residues: Histone H3 (136 aa).

The interval 1–45 is disordered; it reads MARTKQTARKSTGGKAPRKQLATKAARKSAPATGGVKKPHRYRPG. An N6,N6,N6-trimethyllysine; alternate modification is found at K5. The residue at position 5 (K5) is an N6,N6-dimethyllysine; alternate. K5 and K10 each carry N6-methyllysine; alternate. An N6-acetyllysine; alternate modification is found at K10. Position 11 is a phosphoserine (S11). At K15 the chain carries N6,N6-dimethyllysine; alternate. N6-methyllysine; alternate is present on residues K15, K19, K24, K28, and K37. Residues K15, K19, K24, K28, and K37 each carry the N6-acetyllysine; alternate modification. N6,N6,N6-trimethyllysine; alternate is present on residues K28 and K37. Residues K28 and K37 each carry the N6,N6-dimethyllysine; alternate modification. N6-acetyllysine is present on residues K57 and K65. The residue at position 80 (K80) is an N6,N6,N6-trimethyllysine; alternate. N6,N6-dimethyllysine; alternate is present on K80. An N6-methyllysine; alternate modification is found at K80.

This sequence belongs to the histone H3 family. As to quaternary structure, the nucleosome is a histone octamer containing two molecules each of H2A, H2B, H3 and H4 assembled in one H3-H4 heterotetramer and two H2A-H2B heterodimers. The octamer wraps approximately 147 bp of DNA. Post-translationally, phosphorylated to form H3S10ph. H3S10ph promotes subsequent H3K14ac formation and is required for transcriptional activation through TBP recruitment to the promoters. Mono-, di- and trimethylated by the COMPASS complex to form H3K4me1/2/3. H3K4me activates gene expression by regulating transcription elongation and plays a role in telomere length maintenance. H3K4me enrichment correlates with transcription levels, and occurs in a 5' to 3' gradient with H3K4me3 enrichment at the 5'-end of genes, shifting to H3K4me2 and then H3K4me1. Methylated by SET2 to form H3K36me. H3K36me represses gene expression. Methylated by DOT1 to form H3K79me. H3K79me is required for association of SIR proteins with telomeric regions and for telomeric silencing. The COMPASS-mediated formation of H3K4me2/3 and the DOT1-mediated formation of H3K79me require H2BK123ub1. In terms of processing, acetylation of histone H3 leads to transcriptional activation. H3K14ac formation by GCN5 is promoted by H3S10ph. H3K14ac can also be formed by ESA1. H3K56ac formation occurs predominantly in newly synthesized H3 molecules during G1, S and G2/M of the cell cycle and may be involved in DNA repair.

It localises to the nucleus. It is found in the chromosome. Its function is as follows. Core component of nucleosome. Nucleosomes wrap and compact DNA into chromatin, limiting DNA accessibility to the cellular machineries which require DNA as a template. Histones thereby play a central role in transcription regulation, DNA repair, DNA replication and chromosomal stability. DNA accessibility is regulated via a complex set of post-translational modifications of histones, also called histone code, and nucleosome remodeling. This chain is Histone H3 (H3.1), found in Mortierella alpina (Oleaginous fungus).